Here is a 219-residue protein sequence, read N- to C-terminus: Arginine transport system permease protein ArtQ (219 aa).

The next 5 helical transmembrane spans lie at 19–39 (LAIT…LGIV), 51–73 (FIWI…QLMI), 88–108 (QFWA…SEII), 149–169 (AIVN…VIGL), and 187–207 (LEPL…LTFI). The ABC transmembrane type-1 domain maps to 19–208 (LAITLKIVVV…VLVLILTFIG (190 aa)).

It belongs to the binding-protein-dependent transport system permease family. HisMQ subfamily.

It localises to the cell membrane. Its function is as follows. Part of a binding-protein-dependent transport system for arginine. Probably responsible for the translocation of the substrate across the membrane. This chain is Arginine transport system permease protein ArtQ (artQ), found in Bacillus subtilis (strain 168).